A 431-amino-acid chain; its full sequence is Cyclic 2,3-diphosphoglycerate synthetase (431 aa).

This sequence belongs to the cyclic 2,3-diphosphoglycerate synthetase family.

Its subcellular location is the cytoplasm. It carries out the reaction (2R)-2,3-bisphosphoglycerate + ATP + H(+) = cyclic (2R)-2,3-bisphosphoglycerate + ADP + phosphate. Catalyzes the formation of cyclic 2,3-diphosphoglycerate (cDPG) by formation of an intramolecular phosphoanhydride bond at the expense of ATP. In Pyrococcus furiosus (strain ATCC 43587 / DSM 3638 / JCM 8422 / Vc1), this protein is Cyclic 2,3-diphosphoglycerate synthetase.